A 613-amino-acid chain; its full sequence is Dihydroxy-acid dehydratase (613 aa).

Mg(2+) is bound at residue aspartate 81. Residue cysteine 122 coordinates [2Fe-2S] cluster. Residues aspartate 123 and lysine 124 each contribute to the Mg(2+) site. Position 124 is an N6-carboxylysine (lysine 124). Cysteine 195 contacts [2Fe-2S] cluster. Glutamate 491 is a binding site for Mg(2+). Catalysis depends on serine 517, which acts as the Proton acceptor.

It belongs to the IlvD/Edd family. Homodimer. The cofactor is [2Fe-2S] cluster. It depends on Mg(2+) as a cofactor.

The catalysed reaction is (2R)-2,3-dihydroxy-3-methylbutanoate = 3-methyl-2-oxobutanoate + H2O. It carries out the reaction (2R,3R)-2,3-dihydroxy-3-methylpentanoate = (S)-3-methyl-2-oxopentanoate + H2O. The protein operates within amino-acid biosynthesis; L-isoleucine biosynthesis; L-isoleucine from 2-oxobutanoate: step 3/4. Its pathway is amino-acid biosynthesis; L-valine biosynthesis; L-valine from pyruvate: step 3/4. Functions in the biosynthesis of branched-chain amino acids. Catalyzes the dehydration of (2R,3R)-2,3-dihydroxy-3-methylpentanoate (2,3-dihydroxy-3-methylvalerate) into 2-oxo-3-methylpentanoate (2-oxo-3-methylvalerate) and of (2R)-2,3-dihydroxy-3-methylbutanoate (2,3-dihydroxyisovalerate) into 2-oxo-3-methylbutanoate (2-oxoisovalerate), the penultimate precursor to L-isoleucine and L-valine, respectively. The protein is Dihydroxy-acid dehydratase of Hyphomonas neptunium (strain ATCC 15444).